A 206-amino-acid chain; its full sequence is Large ribosomal subunit protein uL4 (206 aa).

A disordered region spans residues 63-97 (MYKQKGTGRARHHSARAPQFRGGGKAHGPVVRSHE). Residues 64-77 (YKQKGTGRARHHSA) show a composition bias toward basic residues.

The protein belongs to the universal ribosomal protein uL4 family. Part of the 50S ribosomal subunit.

Functionally, one of the primary rRNA binding proteins, this protein initially binds near the 5'-end of the 23S rRNA. It is important during the early stages of 50S assembly. It makes multiple contacts with different domains of the 23S rRNA in the assembled 50S subunit and ribosome. In terms of biological role, forms part of the polypeptide exit tunnel. This chain is Large ribosomal subunit protein uL4, found in Rhizobium johnstonii (strain DSM 114642 / LMG 32736 / 3841) (Rhizobium leguminosarum bv. viciae).